An 81-amino-acid chain; its full sequence is MSGVTGERPFSDIVTSIRYWVIHSITIPMLFIAGWLFVSTGLAYDVFGTPRPDEYFTQERQELPIIQDRFEAKNQITEFNK.

A helical transmembrane segment spans residues 21–35 (VIHSITIPMLFIAGW). A heme-binding site is contributed by H23.

The protein belongs to the PsbE/PsbF family. As to quaternary structure, heterodimer of an alpha subunit and a beta subunit. PSII is composed of 1 copy each of membrane proteins PsbA, PsbB, PsbC, PsbD, PsbE, PsbF, PsbH, PsbI, PsbJ, PsbK, PsbL, PsbM, PsbT, PsbX, PsbY, PsbZ, Psb30/Ycf12, peripheral proteins PsbO, CyanoQ (PsbQ), PsbU, PsbV and a large number of cofactors. It forms dimeric complexes. Heme b is required as a cofactor.

It localises to the cellular thylakoid membrane. In terms of biological role, this b-type cytochrome is tightly associated with the reaction center of photosystem II (PSII). PSII is a light-driven water:plastoquinone oxidoreductase that uses light energy to abstract electrons from H(2)O, generating O(2) and a proton gradient subsequently used for ATP formation. It consists of a core antenna complex that captures photons, and an electron transfer chain that converts photonic excitation into a charge separation. The chain is Cytochrome b559 subunit alpha from Crocosphaera subtropica (strain ATCC 51142 / BH68) (Cyanothece sp. (strain ATCC 51142)).